The sequence spans 499 residues: Protein adenylyltransferase Fic (499 aa).

The helical transmembrane segment at 38-58 threads the bilayer; sequence FHYFVIFASGSLFSGLMFGLL. TPR repeat units lie at residues 126 to 159 and 160 to 194; these read ALSSLKVAIEMKTMGKDDKAARLFQHALALSPKH and PEILTKYGEFLEHNQQDVVRADHYYYQALTVNPSH. The Inhibitory (S/T)XXXE(G/N) motif signature appears at 251-256; sequence SVGIEG. ATP-binding positions include glutamate 255 and 337–340; that span reads VGGH. One can recognise a Fido domain in the interval 306 to 441; the sequence is ITLKDILEIH…IRPFVRFIAD (136 aa). The active site involves histidine 384. ATP is bound by residues 388-395, 420-421, and asparagine 428; these read DGNGRTSR and YY.

Belongs to the fic family. In terms of assembly, homodimer.

The protein localises to the membrane. The catalysed reaction is L-tyrosyl-[protein] + ATP = O-(5'-adenylyl)-L-tyrosyl-[protein] + diphosphate. It carries out the reaction L-threonyl-[protein] + ATP = 3-O-(5'-adenylyl)-L-threonyl-[protein] + diphosphate. The enzyme catalyses 3-O-(5'-adenylyl)-L-threonyl-[protein] + H2O = L-threonyl-[protein] + AMP + H(+). Its activity is regulated as follows. The side chain of Glu-255 determines which of the two opposing activities (AMPylase or de-AMPylase) will take place. In response to endoplasmic reticulum stress, mediates de-AMPylase activity. Adenylyltransferase activity is inhibited by the inhibitory helix present at the N-terminus: Glu-255 binds ATP and competes with ATP-binding at Arg-395, thereby preventing adenylyltransferase activity. In unstressed cells, disengagement of Glu-255 promotes adenylyltransferase activity. Activation dissociates ATP-binding from Glu-255, allowing ordered binding of the entire ATP moiety with the alpha-phosphate in an orientation that is productive for accepting an incoming target hydroxyl side chain. Its function is as follows. Protein that can both mediate the addition of adenosine 5'-monophosphate (AMP) to specific residues of target proteins (AMPylation), and the removal of the same modification from target proteins (de-AMPylation), depending on the context. The side chain of Glu-255 determines which of the two opposing activities (AMPylase or de-AMPylase) will take place. Acts as a key regulator of the unfolded protein response (UPR) by mediating AMPylation or de-AMPylation of Hsc70-3/BiP. In unstressed cells, acts as an adenylyltransferase by mediating AMPylation of Hsc70-3/BiP at 'Thr-518', thereby inactivating it. In response to endoplasmic reticulum stress, acts as a phosphodiesterase by mediating removal of ATP (de-AMPylation) from Hsc70-3/BiP at 'Thr-518', leading to restore HSPA5/BiP activity. This chain is Protein adenylyltransferase Fic, found in Aedes aegypti (Yellowfever mosquito).